The following is a 310-amino-acid chain: Olfactory receptor 9A2 (310 aa).

Residues Met1 to His24 lie on the Extracellular side of the membrane. Asn4 carries an N-linked (GlcNAc...) asparagine glycan. Residues Ile25–Ile45 traverse the membrane as a helical segment. Over Val46–Arg53 the chain is Cytoplasmic. Residues Leu54–Thr74 traverse the membrane as a helical segment. Topologically, residues Ile75 to Ser98 are extracellular. Over Asp117 to Ser135 the chain is Cytoplasmic. The chain crosses the membrane as a helical span at residues Thr136–Ile156. The Extracellular segment spans residues Tyr157–Phe193. A helical membrane pass occupies residues Ile194–Ser213. Residues Tyr214–Ala233 are Cytoplasmic-facing. Residues Phe234–Leu254 form a helical membrane-spanning segment. The Extracellular segment spans residues Tyr255–Asn267. The helical transmembrane segment at Lys268–Leu288 threads the bilayer. The Cytoplasmic segment spans residues Arg289 to Asp310.

This sequence belongs to the G-protein coupled receptor 1 family.

It is found in the cell membrane. Functionally, odorant receptor. The chain is Olfactory receptor 9A2 (OR9A2) from Homo sapiens (Human).